The sequence spans 148 residues: Glutamyl-tRNA(Gln) amidotransferase subunit C, mitochondrial (148 aa).

This sequence belongs to the GatC family. As to quaternary structure, subunit of the heterotrimeric GatCAB amidotransferase (AdT) complex, composed of A, B and C subunits.

The protein resides in the mitochondrion. It catalyses the reaction L-glutamyl-tRNA(Gln) + L-glutamine + ATP + H2O = L-glutaminyl-tRNA(Gln) + L-glutamate + ADP + phosphate + H(+). Allows the formation of correctly charged Gln-tRNA(Gln) through the transamidation of misacylated Glu-tRNA(Gln) in the mitochondria. The reaction takes place in the presence of glutamine and ATP through an activated gamma-phospho-Glu-tRNA(Gln). The chain is Glutamyl-tRNA(Gln) amidotransferase subunit C, mitochondrial from Drosophila pseudoobscura pseudoobscura (Fruit fly).